The primary structure comprises 258 residues: uncharacterized protein (258 aa).

This is an uncharacterized protein from Acidianus filamentous virus 2 (isolate Italy/Pozzuoli) (AFV-2).